The sequence spans 264 residues: Carbohydrate deacetylase (264 aa).

D20 functions as the Proton acceptor in the catalytic mechanism. Residues D21, H60, and H127 each contribute to the Mg(2+) site. H215 acts as the Proton donor in catalysis.

Belongs to the YdjC deacetylase family. Homodimer. Mg(2+) serves as cofactor.

Functionally, probably catalyzes the deacetylation of acetylated carbohydrates an important step in the degradation of oligosaccharides. The protein is Carbohydrate deacetylase of Thermus thermophilus (strain ATCC 27634 / DSM 579 / HB8).